Consider the following 55-residue polypeptide: Large ribosomal subunit protein bL33 (55 aa).

This sequence belongs to the bacterial ribosomal protein bL33 family.

This Micrococcus luteus (strain ATCC 4698 / DSM 20030 / JCM 1464 / CCM 169 / CCUG 5858 / IAM 1056 / NBRC 3333 / NCIMB 9278 / NCTC 2665 / VKM Ac-2230) (Micrococcus lysodeikticus) protein is Large ribosomal subunit protein bL33.